The chain runs to 203 residues: Small ribosomal subunit protein uS4 (203 aa).

The region spanning 93 to 153 is the S4 RNA-binding domain; sequence RRLDNIVYRL…DKSKNLQQVK (61 aa).

It belongs to the universal ribosomal protein uS4 family. Part of the 30S ribosomal subunit. Contacts protein S5. The interaction surface between S4 and S5 is involved in control of translational fidelity.

One of the primary rRNA binding proteins, it binds directly to 16S rRNA where it nucleates assembly of the body of the 30S subunit. Its function is as follows. With S5 and S12 plays an important role in translational accuracy. The sequence is that of Small ribosomal subunit protein uS4 from Lactobacillus gasseri (strain ATCC 33323 / DSM 20243 / BCRC 14619 / CIP 102991 / JCM 1131 / KCTC 3163 / NCIMB 11718 / NCTC 13722 / AM63).